We begin with the raw amino-acid sequence, 234 residues long: Isoprenyl transferase (234 aa).

Asp13 is an active-site residue. Asp13 lines the Mg(2+) pocket. Residues 14 to 17, Trp18, Arg26, His30, and 58 to 60 contribute to the substrate site; these read GNGR and STE. Asn61 (proton acceptor) is an active-site residue. Substrate-binding positions include Trp62, Arg64, Arg180, and 186 to 188; that span reads RLS. Residue Glu199 coordinates Mg(2+).

This sequence belongs to the UPP synthase family. Homodimer. It depends on Mg(2+) as a cofactor.

Functionally, catalyzes the condensation of isopentenyl diphosphate (IPP) with allylic pyrophosphates generating different type of terpenoids. The sequence is that of Isoprenyl transferase (uppS) from Helicobacter pylori (strain ATCC 700392 / 26695) (Campylobacter pylori).